The sequence spans 181 residues: Heavy metal-associated isoprenylated plant protein 46 (181 aa).

Positions 2–71 (KQKILIRVTM…KVAFAELVSV (70 aa)) constitute an HMA domain. The interval 74–121 (VEPPKKEDEKKGGDGKGAEGKGGDQKGGDKKGPDDKEPPEPKPVPCYP) is disordered. Residues 75 to 113 (EPPKKEDEKKGGDGKGAEGKGGDQKGGDKKGPDDKEPPE) show a composition bias toward basic and acidic residues. Position 178 is a cysteine methyl ester (Cys-178). The S-farnesyl cysteine moiety is linked to residue Cys-178. Residues 179 to 181 (KIM) constitute a propeptide, removed in mature form.

It belongs to the HIPP family.

In terms of biological role, probable heavy-metal-binding protein. This Arabidopsis thaliana (Mouse-ear cress) protein is Heavy metal-associated isoprenylated plant protein 46.